The chain runs to 562 residues: Catalase T (562 aa).

Active-site residues include H64 and N137. Y351 is a heme binding site.

The protein belongs to the catalase family. As to quaternary structure, homotetramer. Heme is required as a cofactor.

The protein localises to the cytoplasm. It catalyses the reaction 2 H2O2 = O2 + 2 H2O. Its function is as follows. Occurs in almost all aerobically respiring organisms and serves to protect cells from the toxic effects of hydrogen peroxide. This chain is Catalase T (CTT1), found in Saccharomyces cerevisiae (strain YJM789) (Baker's yeast).